The following is an 84-amino-acid chain: U4-theraphotoxin-Hhn1aa (84 aa).

An N-terminal signal peptide occupies residues 1–22 (MKVTLIAILTCAAVLVLHTTAA). A propeptide spanning residues 23–47 (EELEESQLMEVGMPDTELAAVDEER) is cleaved from the precursor. Intrachain disulfides connect C51-C65 and C55-C76.

This sequence belongs to the neurotoxin 12 (Hwtx-2) family. 02 (Hwtx-2) subfamily. As to expression, expressed by the venom gland.

The protein localises to the secreted. Its function is as follows. Postsynaptic neurotoxin. This is U4-theraphotoxin-Hhn1aa from Cyriopagopus hainanus (Chinese bird spider).